The primary structure comprises 49 residues: uncharacterized protein (49 aa).

This is an uncharacterized protein from Enterobacteria phage T4 (Bacteriophage T4).